Reading from the N-terminus, the 260-residue chain is Snake venom serine protease homolog KN4 (260 aa).

A signal peptide spans 1-18 (MVLIRVLANLLILQLSYA). The propeptide occupies 19–24 (QKSSEL). The region spanning 25 to 251 (IIGGDECNIN…HLDWIQNIIA (227 aa)) is the Peptidase S1 domain. 6 cysteine pairs are disulfide-bonded: Cys31/Cys165, Cys52/Cys68, Cys100/Cys258, Cys144/Cys212, Cys176/Cys191, and Cys202/Cys227. Asn83, Asn123, Asn124, Asn156, and Asn172 each carry an N-linked (GlcNAc...) asparagine glycan. N-linked (GlcNAc...) asparagine glycosylation occurs at Asn253.

It belongs to the peptidase S1 family. Snake venom subfamily. As to expression, expressed by the venom gland.

Its subcellular location is the secreted. Its function is as follows. Snake venom serine protease homolog that may act in the hemostasis system of the prey. This Trimeresurus stejnegeri (Chinese green tree viper) protein is Snake venom serine protease homolog KN4.